The following is a 283-amino-acid chain: MEMO1 family protein MK0963 (283 aa).

The protein belongs to the MEMO1 family.

This chain is MEMO1 family protein MK0963, found in Methanopyrus kandleri (strain AV19 / DSM 6324 / JCM 9639 / NBRC 100938).